The following is a 353-amino-acid chain: uncharacterized protein (353 aa).

The Mn(2+) site is built by Asp-212, Asp-223, His-287, Glu-316, and Glu-330.

The protein belongs to the peptidase M24B family. Requires Mn(2+) as cofactor.

This is an uncharacterized protein from Bacillus subtilis (strain 168).